Reading from the N-terminus, the 728-residue chain is MADPSSYRPRPGEIPDSPGVYRFRDEHRRVIYVGKAKSLRQRLANYFQDLAHLHPRTRTMVTTAASVEWTVVSTEVEALQLEYSWIKEYDPRFNVKYRDDKSYPYLAVTMNEEFPRVQVMRGQKKKGVRYFGPYGHAWAIRDTVDLLLRVFPVRTCSAGVFKNAARTGRPCLLGYIGKCSAPCVGRITPDDHWDLADEFCDFMAGRTGTYLRRLERQMAEAAEEMEYERAARLRDDIGALKKAMEKSAVVLADATDADLIAVAEDELEAAVQIFHVRGGRVRGQRGWVTDKVEEITTGALVEHALQQLYGEEKGDAVPKEVLVPALPDPVEPVQQWLAERRGSGVSLRIPQRGDKKALMETVQRNAQQALVLHKTKRASDLTTRSRALEEIAEALDLDSAPLRIECYDISHLQGDDVVASMVVFEDGLARKSEYRRFQIKGFEGQDDVRSMHEVITRRFRRYLAEKERTGEWADGEGLVDDARHPNGDAAPNGDAAPNDGAAPDDGAARTDGRGLTDGQELTDGPALKDDDGRPKRFAYPPQLVVVDGGQPQVAAAQRALDELGIDDIAVCGLAKRLEEVWLPREDDPVVLPRTSEGLYLLQRVRDEAHRFAITYQRAKRAKRFRAGPLDDVPGLGETRKQALIKHFGSVKKLRSATIDQICEVPGIGRKTAETVAVALARATPAAPAVNTATGEIMDDDDGAPETTADAPGEPVSAGTPDERRGQER.

One can recognise a GIY-YIG domain in the interval 16–95 (DSPGVYRFRD…IKEYDPRFNV (80 aa)). The UVR domain occupies 208–243 (GTYLRRLERQMAEAAEEMEYERAARLRDDIGALKKA). Disordered stretches follow at residues 473–535 (ADGE…GRPK) and 689–728 (VNTA…GQER). The segment covering 487–505 (GDAAPNGDAAPNDGAAPDD) has biased composition (low complexity).

It belongs to the UvrC family. In terms of assembly, interacts with UvrB in an incision complex.

It is found in the cytoplasm. Functionally, the UvrABC repair system catalyzes the recognition and processing of DNA lesions. UvrC both incises the 5' and 3' sides of the lesion. The N-terminal half is responsible for the 3' incision and the C-terminal half is responsible for the 5' incision. The sequence is that of UvrABC system protein C from Streptomyces coelicolor (strain ATCC BAA-471 / A3(2) / M145).